The chain runs to 365 residues: DNA N6-methyl methyltransferase (365 aa).

This sequence belongs to the MT-A70-like family.

The catalysed reaction is a 2'-deoxyadenosine in DNA + S-adenosyl-L-methionine = an N(6)-methyl-2'-deoxyadenosine in DNA + S-adenosyl-L-homocysteine + H(+). Its function is as follows. Methylates DNA on the 6th position of adenine (N(6)-methyladenosine). N(6)-methyladenosine (m6A) DNA is involved in epigenetic transgenerational inheritance. The chain is DNA N6-methyl methyltransferase from Caenorhabditis elegans.